A 154-amino-acid chain; its full sequence is Ascorbate-specific PTS system EIIA component (154 aa).

One can recognise a PTS EIIA type-2 domain in the interval 6–150 (SLAENNSIRL…QEVLDLIDRT (145 aa)). The active-site Tele-phosphohistidine intermediate is histidine 68. Histidine 68 is subject to Phosphohistidine.

It localises to the cytoplasm. Its function is as follows. The phosphoenolpyruvate-dependent sugar phosphotransferase system (sugar PTS), a major carbohydrate active transport system, catalyzes the phosphorylation of incoming sugar substrates concomitantly with their translocation across the cell membrane. The enzyme II UlaABC PTS system is involved in ascorbate transport. The protein is Ascorbate-specific PTS system EIIA component (ulaC) of Salmonella paratyphi A (strain ATCC 9150 / SARB42).